The sequence spans 366 residues: Leucine-rich repeat-containing protein 58 (366 aa).

Serine 19 is modified (phosphoserine). LRR repeat units follow at residues alanine 40–glycine 61, histidine 64–serine 86, glycine 87–leucine 108, serine 116–arginine 138, alanine 139–arginine 161, serine 162–proline 184, serine 185–leucine 206, serine 208–leucine 229, and histidine 231–threonine 251. Residues alanine 337–glutamate 346 show a composition bias toward low complexity. The tract at residues alanine 337–alanine 356 is disordered.

The protein is Leucine-rich repeat-containing protein 58 (Lrrc58) of Mus musculus (Mouse).